Here is a 509-residue protein sequence, read N- to C-terminus: Zinc finger protein CKR1 (509 aa).

The KRAB domain maps to 1–61 (MEPYVLLDPR…GSEEPQTHPP (61 aa)). Basic and acidic residues-rich tracts occupy residues 41–50 (EDAVGLKEDA) and 98–112 (PKRD…RDRP). Residues 41 to 114 (EDAVGLKEDA…PSRVRDRPFG (74 aa)) are disordered. 11 C2H2-type zinc fingers span residues 113-135 (FGCP…RRVH), 141-163 (YSCP…RRTH), 169-191 (HKCQ…SRGH), 197-219 (HRCG…RRVH), 225-247 (YECP…RRSH), 279-303 (QRCA…ERSH), 303-325 (HRCG…RRVH), 331-353 (FPCG…GKTH), 359-383 (YKCG…GHAA), 387-409 (FTCG…RRVH), and 415-437 (YECP…RRSH). A disordered region spans residues 428 to 479 (SHLTKHRRSHGPKAPLLPVQGRGEAGEPLRASPLSSGAEQRDGRRAQRGGVE).

It belongs to the krueppel C2H2-type zinc-finger protein family.

Its subcellular location is the nucleus. The sequence is that of Zinc finger protein CKR1 from Gallus gallus (Chicken).